The primary structure comprises 422 residues: Ena/VASP-like protein (422 aa).

Residues 4-118 (FEEFSEQSIC…NAMLFALNIM (115 aa)) form the WH1 domain. Over residues 120 to 135 (SQEGGPSSQRQVQNGP) the composition is skewed to polar residues. Disordered stretches follow at residues 120 to 139 (SQEG…SPDE) and 147 to 375 (VMEQ…PAGS). Residue S136 is modified to Phosphoserine. Residues 147–163 (VMEQHQQQRQESLERRT) show a composition bias toward basic and acidic residues. Residues 175-186 (PSSAASAPVSCS) show a composition bias toward low complexity. Positions 187–212 (GPPPPPPPPVPPPPTGATPPPPPPLP) are enriched in pro residues. An EVH2 block A region spans residues 228-248 (GLAAAIAGAKLRRVQRPEDAS). Positions 228–419 (GLAAAIAGAK…DAIRQELSGI (192 aa)) are EVH2. A KLKR motif is present at residues 237 to 240 (KLRR). The span at 248–259 (SGGSSPSGTSKS) shows a compositional bias: low complexity. 2 positions are modified to phosphoserine: S252 and S265. Residues 271 to 288 (GGLMEEMNKLLAKRRKAA) are EVH2 block B. The segment covering 305-326 (EDPSTSPSPGTRAASQPPNSSE) has biased composition (polar residues). Phosphoserine occurs at positions 310, 312, 335, 337, 347, 355, 360, and 375. Over residues 327–337 (AGRKPWERSNS) the composition is skewed to basic and acidic residues. The tract at residues 348–368 (RTPSVAKSPEAKSPLQSQPHS) is required for interaction with ZDHHC17. The interval 385-419 (DLDRMKQEILEEVVRELHKVKDEIIDAIRQELSGI) is EVH2 block C. Positions 388–414 (RMKQEILEEVVRELHKVKDEIIDAIRQ) form a coiled coil.

It belongs to the Ena/VASP family. In terms of assembly, homotetramer. Binds to the SH3 domains of ABL1, LYN and SRC. Also binds to profilin, with preference for isoform IIa of PFN2, and the WW domain of APBB1/FE65. Binds to SEMA6A. Interacts, via the Pro-rich region, with the C-terminal SH3 domain of DNMBP. Interacts with RAPH1. Binds, via the EVH1 domain, the Pro-rich domain of Listeria monocytogenes actA. Binds, via the EVH1 domain, the Pro-rich domain of ZYX. Interacts with FYB1. Interacts with ZDHHC17. Post-translationally, phosphorylated by PKA; phosphorylation abolishes binding to SH3 domains of ABL and SRC.

It is found in the cytoplasm. The protein localises to the cytoskeleton. It localises to the stress fiber. The protein resides in the cell projection. Its subcellular location is the lamellipodium. Its function is as follows. Ena/VASP proteins are actin-associated proteins involved in a range of processes dependent on cytoskeleton remodeling and cell polarity such as axon guidance and lamellipodial and filopodial dynamics in migrating cells. EVL enhances actin nucleation and polymerization. The sequence is that of Ena/VASP-like protein (EVL) from Pongo abelii (Sumatran orangutan).